The following is a 244-amino-acid chain: Lactate utilization protein A (244 aa).

The protein belongs to the LutA/YkgE family.

In terms of biological role, is involved in L-lactate degradation and allows cells to grow with lactate as the sole carbon source. In Oceanobacillus iheyensis (strain DSM 14371 / CIP 107618 / JCM 11309 / KCTC 3954 / HTE831), this protein is Lactate utilization protein A.